A 95-amino-acid chain; its full sequence is MSVTIKDVAYIAELARLSFTDTEKEKMTSELNAILQYVEKLDEVDTDGVEPLSSIHDEVNVLRDDVRQESVPNETALLNAPDKLDRFFRVPKVIG.

Belongs to the GatC family. As to quaternary structure, heterotrimer of A, B and C subunits.

The catalysed reaction is L-glutamyl-tRNA(Gln) + L-glutamine + ATP + H2O = L-glutaminyl-tRNA(Gln) + L-glutamate + ADP + phosphate + H(+). The enzyme catalyses L-aspartyl-tRNA(Asn) + L-glutamine + ATP + H2O = L-asparaginyl-tRNA(Asn) + L-glutamate + ADP + phosphate + 2 H(+). Functionally, allows the formation of correctly charged Asn-tRNA(Asn) or Gln-tRNA(Gln) through the transamidation of misacylated Asp-tRNA(Asn) or Glu-tRNA(Gln) in organisms which lack either or both of asparaginyl-tRNA or glutaminyl-tRNA synthetases. The reaction takes place in the presence of glutamine and ATP through an activated phospho-Asp-tRNA(Asn) or phospho-Glu-tRNA(Gln). This is Aspartyl/glutamyl-tRNA(Asn/Gln) amidotransferase subunit C from Chlorobium phaeobacteroides (strain BS1).